A 67-amino-acid polypeptide reads, in one-letter code: MPQLDTSTWFITITSMTITLFIMFQLKLSKHSYPSNPELKPINTSMHTTPWESKWTKIYSPLSLPQQ.

The chain crosses the membrane as a helical span at residues 8–24 (TWFITITSMTITLFIMF). K54 bears the N6-acetyllysine; alternate mark. K54 is subject to N6-succinyllysine; alternate. K57 carries the post-translational modification N6-acetyllysine.

This sequence belongs to the ATPase protein 8 family. F-type ATPases have 2 components, CF(1) - the catalytic core - and CF(0) - the membrane proton channel. Component of an ATP synthase complex composed of ATP5PB, ATP5MC1, ATP5F1E, ATP5PD, ATP5ME, ATP5PF, ATP5MF, MT-ATP6, MT-ATP8, ATP5F1A, ATP5F1B, ATP5F1D, ATP5F1C, ATP5PO, ATP5MG, ATP5MK and ATP5MJ. Interacts with PRICKLE3.

The protein localises to the mitochondrion membrane. Mitochondrial membrane ATP synthase (F(1)F(0) ATP synthase or Complex V) produces ATP from ADP in the presence of a proton gradient across the membrane which is generated by electron transport complexes of the respiratory chain. F-type ATPases consist of two structural domains, F(1) - containing the extramembraneous catalytic core and F(0) - containing the membrane proton channel, linked together by a central stalk and a peripheral stalk. During catalysis, ATP synthesis in the catalytic domain of F(1) is coupled via a rotary mechanism of the central stalk subunits to proton translocation. Part of the complex F(0) domain. Minor subunit located with subunit a in the membrane. In Rhinoceros unicornis (Greater Indian rhinoceros), this protein is ATP synthase protein 8 (MT-ATP8).